Consider the following 131-residue polypeptide: Large ribosomal subunit protein eL32 (131 aa).

Belongs to the eukaryotic ribosomal protein eL32 family. As to quaternary structure, component of the large ribosomal subunit. Mature ribosomes consist of a small (40S) and a large (60S) subunit. The 40S subunit contains about 32 different proteins and 1 molecule of RNA (18S). The 60S subunit contains 45 different proteins and 3 molecules of RNA (25S, 5.8S and 5S).

It localises to the cytoplasm. Functionally, component of the ribosome, a large ribonucleoprotein complex responsible for the synthesis of proteins in the cell. The small ribosomal subunit (SSU) binds messenger RNAs (mRNAs) and translates the encoded message by selecting cognate aminoacyl-transfer RNA (tRNA) molecules. The large subunit (LSU) contains the ribosomal catalytic site termed the peptidyl transferase center (PTC), which catalyzes the formation of peptide bonds, thereby polymerizing the amino acids delivered by tRNAs into a polypeptide chain. The nascent polypeptides leave the ribosome through a tunnel in the LSU and interact with protein factors that function in enzymatic processing, targeting, and the membrane insertion of nascent chains at the exit of the ribosomal tunnel. This is Large ribosomal subunit protein eL32 from Candida albicans (strain SC5314 / ATCC MYA-2876) (Yeast).